The primary structure comprises 267 residues: Protein LicA (267 aa).

It belongs to the peptidase S49 family.

Functionally, mediates phase variation of the LPS epitopes. Phase variation of H.influenza LPS epitopes expressed by LicA is determined by a translational switch. The sequence is that of Protein LicA (licA) from Haemophilus influenzae (strain ATCC 51907 / DSM 11121 / KW20 / Rd).